The sequence spans 493 residues: Solute carrier family 2, facilitated glucose transporter member 3 (493 aa).

Residues 1-10 (MGTTKVTPSL) lie on the Cytoplasmic side of the membrane. A helical transmembrane segment spans residues 11 to 32 (VFAVTVATIGSFQFGYNTGVIN). Over 33–64 (APETILKDFLNYTLEERLEDLPSEGLLTALWS) the chain is Extracellular. The N-linked (GlcNAc...) asparagine glycan is linked to N43. Residues 65–85 (LCVAIFSVGGMIGSFSVGLFV) form a helical membrane-spanning segment. Residues 86-90 (NRFGR) lie on the Cytoplasmic side of the membrane. Residues 91 to 111 (RNSMLLVNLLAIIAGCLMGFA) form a helical membrane-spanning segment. Residues 112–118 (KIAESVE) lie on the Extracellular side of the membrane. A helical transmembrane segment spans residues 119-142 (MLILGRLLIGIFCGLCTGFVPMYI). Residues 143–153 (GEVSPTALRGA) lie on the Cytoplasmic side of the membrane. Residues 154-174 (FGTLNQLGIVVGILVAQIFGL) form a helical membrane-spanning segment. Q159 provides a ligand contact to D-glucose. Topologically, residues 175-183 (DFILGSEEL) are extracellular. The chain crosses the membrane as a helical span at residues 184 to 204 (WPGLLGLTIIPAILQSAALPF). Residues 205-269 (CPESPRFLLI…LFRSPNYVQP (65 aa)) lie on the Cytoplasmic side of the membrane. Residue T232 is modified to Phosphothreonine. A helical transmembrane segment spans residues 270–290 (LLISIVLQLSQQLSGINAVFY). An important for selectivity against fructose region spans residues 277–279 (QLS). D-glucose-binding positions include 280 to 281 (QQ) and N286. The Extracellular segment spans residues 291–304 (YSTGIFKDAGVQEP). A helical transmembrane segment spans residues 305–325 (IYATIGAGVVNTIFTVVSLFL). N315 serves as a coordination point for D-glucose. The Cytoplasmic portion of the chain corresponds to 326-331 (VERAGR). Residues 332–352 (RTLHMIGLGGMAVCSVFMTIS) traverse the membrane as a helical segment. The Extracellular portion of the chain corresponds to 353-363 (LLLKDDYEAMS). Residues 364-389 (FVCIVAILIYVAFFEIGPGPIPWFIV) form a helical membrane-spanning segment. D-glucose is bound by residues E378 and W386. Over 390–399 (AELFSQGPRP) the chain is Cytoplasmic. The chain crosses the membrane as a helical span at residues 400 to 420 (AAIAVAGCCNWTSNFLVGMLF). At 421 to 429 (PSAAAYLGA) the chain is on the extracellular side. Residues 430–450 (YVFIIFAAFLIFFLIFTFFKV) traverse the membrane as a helical segment. The Cytoplasmic portion of the chain corresponds to 451–493 (PETKGRTFEDIARAFEGQAHSGKGPAGVELNSMQPVKETPGNA). The disordered stretch occupies residues 469 to 493 (AHSGKGPAGVELNSMQPVKETPGNA). Phosphoserine is present on residues S471 and S482. Position 489 is a phosphothreonine (T489).

It belongs to the major facilitator superfamily. Sugar transporter (TC 2.A.1.1) family. Glucose transporter subfamily. As to quaternary structure, interacts with SMIM43; the interaction may promote SLC2A3-mediated glucose transport to meet the energy needs of mesendoderm differentiation. Expressed in spermatozoa (at protein level). Detected in brain (at protein level). Abundantly expressed in the hippocampus, cerebellum and cerebral cortex with lower expression in the dentate gyrus and piriform cortex.

Its subcellular location is the cell membrane. It is found in the perikaryon. The protein localises to the cell projection. The catalysed reaction is D-glucose(out) = D-glucose(in). It carries out the reaction D-galactose(in) = D-galactose(out). With respect to regulation, deoxyglucose transport is inhibited by D-glucose, D-galactose and maltose. Galactose transport is inhibited by D-glucose and maltose. Facilitative glucose transporter. Can also mediate the uptake of various other monosaccharides across the cell membrane. Mediates the uptake of glucose, 2-deoxyglucose, galactose, mannose, xylose and fucose, and probably also dehydroascorbate. Does not mediate fructose transport. Required for mesendoderm differentiation. The protein is Solute carrier family 2, facilitated glucose transporter member 3 of Mus musculus (Mouse).